Here is a 168-residue protein sequence, read N- to C-terminus: Disulfide bond formation protein B (168 aa).

The Cytoplasmic portion of the chain corresponds to 1–11 (MSNPMRPVRSI). The helical transmembrane segment at 12-28 (LLAIFTGCAGLIGYALY) threads the bilayer. The Periplasmic segment spans residues 29 to 46 (LQLVENLLPCPLCVVQRM). Cys38 and Cys41 are joined by a disulfide. A helical membrane pass occupies residues 47-63 (AYWLIGLTALAGFFHTP). Topologically, residues 64 to 69 (ETTGRR) are cytoplasmic. A helical membrane pass occupies residues 70-87 (IYAGLMAVFAFTGGLVAL). Residues 88–143 (RQAWLVRYPEAFECGISPEEAFLNALPLARWWPVMFEANGDCADVTWKFASLTLPD) are Periplasmic-facing. The cysteines at positions 101 and 129 are disulfide-linked. Residues 144-162 (WSAIFFMILAALSIYVLLV) traverse the membrane as a helical segment. Over 163–168 (RENQRE) the chain is Cytoplasmic.

This sequence belongs to the DsbB family.

It is found in the cell inner membrane. Required for disulfide bond formation in some periplasmic proteins. Acts by oxidizing the DsbA protein. The polypeptide is Disulfide bond formation protein B (Nitrosospira multiformis (strain ATCC 25196 / NCIMB 11849 / C 71)).